The following is a 154-amino-acid chain: Small ribosomal subunit protein uS9 (154 aa).

Positions 135 to 154 are disordered; it reads KESKKYGLKKARKAPQYSKR. A compositionally biased stretch (basic residues) spans 140–154; that stretch reads YGLKKARKAPQYSKR.

Belongs to the universal ribosomal protein uS9 family.

In Salinispora arenicola (strain CNS-205), this protein is Small ribosomal subunit protein uS9.